An 890-amino-acid chain; its full sequence is Protein FAM171A1 (890 aa).

A signal peptide spans 1-21 (MSRSAALLLCLLGCHVWKAVT). The Extracellular segment spans residues 22–303 (KTLREPGAGA…VTQDITTYHT (282 aa)). Asn190 and Asn194 each carry an N-linked (GlcNAc...) asparagine glycan. Residues 304 to 324 (VFLLAILGGMAFILLVLLCLL) traverse the membrane as a helical segment. At 325–890 (LYYCRRKCMK…ERPLMAFNIK (566 aa)) the chain is on the cytoplasmic side. 6 positions are modified to phosphoserine: Ser358, Ser360, Ser371, Ser422, Ser443, and Ser525. Disordered regions lie at residues 730-759 (AGRN…RGDA) and 818-890 (EGSS…FNIK). The segment covering 747–757 (NEPKSARKGRG) has biased composition (basic and acidic residues). Residues 822 to 833 (RRSGGQLPSLQE) show a composition bias toward polar residues. A phosphoserine mark is found at Ser849 and Ser855. The segment covering 858–869 (EEEEDDDDDDQG) has biased composition (acidic residues). Positions 870-883 (EDKKSPWQKREERP) are enriched in basic and acidic residues.

This sequence belongs to the FAM171 family. Interacts with ADAM10, NSG1 and OAZ1.

It is found in the cell membrane. Involved in the regulation of the cytoskeletal dynamics, plays a role in actin stress fiber formation. This is Protein FAM171A1 (FAM171A1) from Pongo abelii (Sumatran orangutan).